A 315-amino-acid polypeptide reads, in one-letter code: Ornithine carbamoyltransferase (315 aa).

Carbamoyl phosphate contacts are provided by residues 57 to 60, Gln84, Arg108, and 135 to 138; these read STRT and HPCQ. L-ornithine-binding positions include Asn166, Asp230, and 234-235; that span reads SM. Residues 270–271 and Arg298 contribute to the carbamoyl phosphate site; that span reads CL.

The protein belongs to the aspartate/ornithine carbamoyltransferase superfamily. OTCase family.

It is found in the cytoplasm. The enzyme catalyses carbamoyl phosphate + L-ornithine = L-citrulline + phosphate + H(+). Its pathway is amino-acid biosynthesis; L-arginine biosynthesis; L-arginine from L-ornithine and carbamoyl phosphate: step 1/3. In terms of biological role, reversibly catalyzes the transfer of the carbamoyl group from carbamoyl phosphate (CP) to the N(epsilon) atom of ornithine (ORN) to produce L-citrulline. The sequence is that of Ornithine carbamoyltransferase from Thermococcus kodakarensis (strain ATCC BAA-918 / JCM 12380 / KOD1) (Pyrococcus kodakaraensis (strain KOD1)).